Consider the following 291-residue polypeptide: Nucleotide-binding protein Ccel_2290 (291 aa).

8–15 serves as a coordination point for ATP; sequence GMSGAGKS. 59–62 lines the GTP pocket; that stretch reads DIRG.

It belongs to the RapZ-like family.

Functionally, displays ATPase and GTPase activities. The polypeptide is Nucleotide-binding protein Ccel_2290 (Ruminiclostridium cellulolyticum (strain ATCC 35319 / DSM 5812 / JCM 6584 / H10) (Clostridium cellulolyticum)).